Here is a 508-residue protein sequence, read N- to C-terminus: Non-structural protein 1 (508 aa).

Residues 424-453 (NTESTTTNNAQSPVSDPVNASANVKTSPAG) show a composition bias toward polar residues. The segment at 424–464 (NTESTTTNNAQSPVSDPVNASANVKTSPAGTHTDESVMKKE) is disordered. The segment covering 455–464 (HTDESVMKKE) has biased composition (basic and acidic residues).

The sequence is that of Non-structural protein 1 (Segment-5) from Banna virus (BAV).